The primary structure comprises 77 residues: MSDCHPVLLPEGPFSREQAVAVTTAYRNVLIEDDQGTHFRLVIRNAEGQLRWRCWNFEPDAGKQLNSYLASEGILRQ.

This sequence belongs to the UPF0401 family.

This Escherichia coli O6:K15:H31 (strain 536 / UPEC) protein is UPF0401 protein ECP_3853.